We begin with the raw amino-acid sequence, 348 residues long: MAMASSAYAPAGGVGTHSAPGRIRPPRGLGFSTTTTKSRPLVLTRRGGGGGNISVARLRCAASSSSAAARPMSQPRFIQHKKEAFWFYRFLSIVYDHVINPGHWTEDMRDDALEPADLYSRKLRVVDVGGGTGFTTLGIVKRVDPENVTLLDQSPHQLEKAREKEALKGVTIMEGDAEDLPFPTDTFDRYVSAGSIEYWPDPQRGIKEAYRVLRLGGVACMIGPVHPTFWLSRFFADMWMLFPKEEEYIEWFKKAGFKDVKLKRIGPKWYRGVRRHGLIMGCSVTGVKREHGDSPLQLGPKVEDVSKPVNPITFLFRFLMGTICAAYYVLVPIYMWIKDQIVPKGMPI.

The segment at 1 to 48 (MAMASSAYAPAGGVGTHSAPGRIRPPRGLGFSTTTTKSRPLVLTRRGG) is disordered. Residues 1–59 (MAMASSAYAPAGGVGTHSAPGRIRPPRGLGFSTTTTKSRPLVLTRRGGGGGNISVARLR) constitute a chloroplast transit peptide. The Chloroplast intermembrane portion of the chain corresponds to 60–317 (CAASSSSAAA…PVNPITFLFR (258 aa)). The tract at residues 125–134 (VVDVGGGTGF) is SAM motif I. An SAM motif II region spans residues 170-183 (VTIMEGDAEDLPFP). Residues 211–224 (RVLRLGGVACMIGP) form an SAM motif III region. Residues 318–338 (FLMGTICAAYYVLVPIYMWIK) form a helical membrane-spanning segment. Residues 339 to 348 (DQIVPKGMPI) are Stromal-facing.

Belongs to the class I-like SAM-binding methyltransferase superfamily. MPBQ/MBSQ MT family.

The protein resides in the plastid. The protein localises to the chloroplast inner membrane. The enzyme catalyses 2-methyl-6-phytyl-1,4-benzene-1,4-diol + S-adenosyl-L-methionine = 2,3-dimethyl-6-phytylbenzene-1,4-diol + S-adenosyl-L-homocysteine + H(+). It carries out the reaction 2-methyl-6-(all-trans-nonaprenyl)benzene-1,4-diol + S-adenosyl-L-methionine = plastoquinol-9 + S-adenosyl-L-homocysteine + H(+). It catalyses the reaction 6-geranylgeranyl-2-methylbenzene-1,4-diol + S-adenosyl-L-methionine = 6-geranylgeranyl-2,3-dimethylbenzene-1,4-diol + S-adenosyl-L-homocysteine + H(+). The protein operates within cofactor biosynthesis; tocopherol biosynthesis. Functionally, involved in a key methylation step in both tocopherols (vitamin E) and plastoquinone synthesis. Catalyzes the conversion of 2-methyl-6-phytyl-1,4-hydroquinone (MPBQ) to 2,3-dimethyl-6-phytyl-1,4-hydroquinone (DMPQ, a substrate for tocopherol cyclase), and 2-methyl-6-solanyl-1,4-benzoquinone (MSBQ) to plastoquinone. This chain is 2-methyl-6-phytyl-1,4-hydroquinone methyltransferase 2, chloroplastic, found in Oryza sativa subsp. japonica (Rice).